The following is a 365-amino-acid chain: Caffeic acid 3-O-methyltransferase (365 aa).

Asn-133 is a (E)-ferulate binding site. S-adenosyl-L-homocysteine-binding residues include Gly-210, Asp-233, Asp-253, Met-254, Met-266, and Lys-267. The active-site Proton acceptor is His-271. Asp-272 serves as a coordination point for (E)-5-hydroxyferulate.

This sequence belongs to the class I-like SAM-binding methyltransferase superfamily. Cation-independent O-methyltransferase family. COMT subfamily. Homodimer.

It catalyses the reaction (E)-caffeate + S-adenosyl-L-methionine = (E)-ferulate + S-adenosyl-L-homocysteine + H(+). It carries out the reaction (E)-5-hydroxyferulate + S-adenosyl-L-methionine = (E)-sinapate + S-adenosyl-L-homocysteine + H(+). The protein operates within aromatic compound metabolism; phenylpropanoid biosynthesis. With respect to regulation, inhibited by Cu(2+), and to a lesser extent by Ni(2+), Mn(2+), Co(2+), Fe(3+) and Zn(2+). Unaffected by Fe(2+) and Mg(2+). Its function is as follows. Catalyzes the conversion of caffeic acid to ferulic acid and of 5-hydroxyferulic acid to sinapic acid. The resulting products may subsequently be converted to the corresponding alcohols that are incorporated into lignins. This Ammi majus (Bishop's weed) protein is Caffeic acid 3-O-methyltransferase.